The chain runs to 389 residues: Spore coat polysaccharide biosynthesis protein SpsC (389 aa).

At Lys-187 the chain carries N6-(pyridoxal phosphate)lysine.

The protein belongs to the DegT/DnrJ/EryC1 family. It depends on pyridoxal 5'-phosphate as a cofactor.

It participates in spore coat biogenesis; spore coat polysaccharide biosynthesis. In Bacillus subtilis (strain 168), this protein is Spore coat polysaccharide biosynthesis protein SpsC (spsC).